The primary structure comprises 96 residues: uncharacterized protein (96 aa).

The N-terminal stretch at 1 to 21 (MLASVLILGAIAVGSAIPTIA) is a signal peptide.

This is an uncharacterized protein from Archaeoglobus fulgidus (strain ATCC 49558 / DSM 4304 / JCM 9628 / NBRC 100126 / VC-16).